A 128-amino-acid chain; its full sequence is L-ectoine synthase (128 aa).

Belongs to the ectoine synthase family.

It catalyses the reaction (2S)-4-acetamido-2-aminobutanoate = L-ectoine + H2O. Its pathway is amine and polyamine biosynthesis; ectoine biosynthesis; L-ectoine from L-aspartate 4-semialdehyde: step 3/3. Functionally, catalyzes the circularization of gamma-N-acetyl-alpha,gamma-diaminobutyric acid (ADABA) to ectoine (1,4,5,6-tetrahydro-2-methyl-4-pyrimidine carboxylic acid), which is an excellent osmoprotectant. The chain is L-ectoine synthase from Virgibacillus pantothenticus.